The following is a 416-amino-acid chain: MDKFQIHGNGPLKGEIRVSGAKNAALPILCAGLLTADTVALDNVPNLQDVRTTLKLLRLMGMQAEFDGARVTLNGADVNVLEAPYELVKTMRASILVLGPLVARFGEARVSLPGGCGIGARPVDQHIKGLQAMGAEITIEHGFIHARAKRLKGARVVTDMITVTGTENLLMAATLAEGETVLENAAREPEVTDLAHLLVKMGAKIDGIGTDRLVVHGVERLHGASHSVIADRIEAGTFLCAAAATLGDLVLRGVQPDILDTVLDKLREAGARLETGDDWIRLAMPHRAKAVSFRTSEYPAFPTDMQAQFMALNAVAEGTARVTETIFENRFMHVQELNRLGADITVEGNTAVVNGVPRLSGANVMATDLRASASLVIAGLVADGETVIDRIYHLDRGYDRMEDKLSAVGAKIRRIA.

22–23 provides a ligand contact to phosphoenolpyruvate; that stretch reads KN. Position 92 (Arg92) interacts with UDP-N-acetyl-alpha-D-glucosamine. The Proton donor role is filled by Cys116. Cys116 carries the post-translational modification 2-(S-cysteinyl)pyruvic acid O-phosphothioketal. Residues 121 to 125, Asp304, and Ile326 contribute to the UDP-N-acetyl-alpha-D-glucosamine site; that span reads RPVDQ.

This sequence belongs to the EPSP synthase family. MurA subfamily.

The protein localises to the cytoplasm. The enzyme catalyses phosphoenolpyruvate + UDP-N-acetyl-alpha-D-glucosamine = UDP-N-acetyl-3-O-(1-carboxyvinyl)-alpha-D-glucosamine + phosphate. The protein operates within cell wall biogenesis; peptidoglycan biosynthesis. Functionally, cell wall formation. Adds enolpyruvyl to UDP-N-acetylglucosamine. This Cupriavidus taiwanensis (strain DSM 17343 / BCRC 17206 / CCUG 44338 / CIP 107171 / LMG 19424 / R1) (Ralstonia taiwanensis (strain LMG 19424)) protein is UDP-N-acetylglucosamine 1-carboxyvinyltransferase.